Reading from the N-terminus, the 322-residue chain is Exosome complex component RRP4 homolog (322 aa).

In terms of domain architecture, S1 motif spans 94–172; sequence GDIVVGRVIE…HDGSLQLQAR (79 aa). One can recognise a KH domain in the interval 182 to 237; it reads GQLLKVDPYLVKRSKHHFHYVESLGIDLIIGCNGFIWVGEHVEVRDPMAIDDQKDE.

Belongs to the RRP4 family. As to quaternary structure, component of the RNA exosome complex. Interacts with RPP41. As to expression, expressed in roots, stems, rosette and cauline leaves, flowers and siliques.

It localises to the cytoplasm. It is found in the nucleus. The protein localises to the nucleolus. Its function is as follows. Non-catalytic component of the RNA exosome complex which has 3'-&gt;5' exoribonuclease activity and participates in a multitude of cellular RNA processing, maturation and degradation events. In vitro, is an active and distributive 3'-&gt;5' exonuclease requiring a free 3'-OH on the substrate and releasing nucleoside 5'-monophosphates. Required for normal embryo development. This is Exosome complex component RRP4 homolog from Arabidopsis thaliana (Mouse-ear cress).